The following is a 473-amino-acid chain: Phosphatidylserine synthase 1 (473 aa).

At alanine 2 the chain carries N-acetylalanine. Residues 2–35 are Cytoplasmic-facing; it reads ASCVGSRTLSKDDVNYRMHFRMINEQQVEDITID. A helical membrane pass occupies residues 36 to 56; that stretch reads FFYRPHTITLLSFTIISLMYF. Over 57–72 the chain is Lumenal; sequence AFTRDDSVPEDNIWRG. The chain crosses the membrane as a helical span at residues 73–93; sequence ILSVIFFFLIISVLAFPNGPF. At 94–102 the chain is on the cytoplasmic side; sequence TRPHPALWR. Residues 103–123 traverse the membrane as a helical segment; sequence MVFGLSVLYFLFLVFLLFLNF. The Lumenal segment spans residues 124-186; that stretch reads EQVKSLMYWL…AMKALLIRSY (63 aa). A helical transmembrane segment spans residues 187–207; it reads GLCWTISITWELTELFFMHLL. Over 208 to 216 the chain is Cytoplasmic; sequence PNFAECWWD. Residues 217 to 237 form a helical membrane-spanning segment; that stretch reads QVILDILLCNGGGIWLGMVVC. Residues 238-286 lie on the Lumenal side of the membrane; the sequence is RFLEMRTYHWASFKDIHTTTGKIKRAVLQFTPASWTYVRWFDPKSSFQR. Residues 287 to 307 traverse the membrane as a helical segment; that stretch reads VAGIYLFMIIWQLTELNTFFL. Residues 308–319 are Cytoplasmic-facing; the sequence is KHIFVFQASHPL. A helical membrane pass occupies residues 320–342; sequence SWGRILFIGCITAPTVRQYYAYL. The Lumenal segment spans residues 343–355; that stretch reads TDTQCKRVGTQCW. A helical membrane pass occupies residues 356 to 376; that stretch reads VFGVIGFLEAIVCIKFGQDLF. At 377–383 the chain is on the cytoplasmic side; the sequence is SKTQILY. Residues 384 to 404 form a helical membrane-spanning segment; that stretch reads VMLWLLCVAFTTFLCLYGMVW. At 405 to 473 the chain is on the lumenal side; that stretch reads YAEHYGHREK…SKVTNGVGKK (69 aa). Phosphoserine is present on residues serine 417, serine 425, serine 442, and serine 454. The interval 428 to 473 is disordered; sequence ISWHHGKGSKGSEDSPPKHSSNHESHSSRRRNRHSKSKVTNGVGKK. Residues 437–454 show a composition bias toward basic and acidic residues; the sequence is KGSEDSPPKHSSNHESHS. Positions 455 to 464 are enriched in basic residues; sequence SRRRNRHSKS.

The protein belongs to the phosphatidyl serine synthase family. As to expression, expressed in kidney, testis, lung, skeletal muscle, liver brain, heart and spleen with highest expression in testis, liver, heart and brain.

The protein resides in the endoplasmic reticulum membrane. The enzyme catalyses a 1,2-diacyl-sn-glycero-3-phosphoethanolamine + L-serine = a 1,2-diacyl-sn-glycero-3-phospho-L-serine + ethanolamine. It catalyses the reaction a 1,2-diacyl-sn-glycero-3-phosphocholine + L-serine = a 1,2-diacyl-sn-glycero-3-phospho-L-serine + choline. The protein operates within phospholipid metabolism; phosphatidylserine biosynthesis. With respect to regulation, potently inhibited by choline in the mitochondria-associated membrane (MAM). Very little inhibition by choline in the endoplasmic reticulum (ER) per se. In terms of biological role, catalyzes a base-exchange reaction in which the polar head group of phosphatidylethanolamine (PE) or phosphatidylcholine (PC) is replaced by L-serine. Catalyzes mainly the conversion of phosphatidylcholine. Also converts, in vitro and to a lesser extent, phosphatidylethanolamine. The sequence is that of Phosphatidylserine synthase 1 (Ptdss1) from Mus musculus (Mouse).